The following is a 357-amino-acid chain: UDP-N-acetylglucosamine--N-acetylmuramyl-(pentapeptide) pyrophosphoryl-undecaprenol N-acetylglucosamine transferase (357 aa).

UDP-N-acetyl-alpha-D-glucosamine-binding positions include 12 to 14, Asn124, Arg162, Ser190, Ile243, 262 to 267, and Gln288; these read TGG and ALTVAE.

Belongs to the glycosyltransferase 28 family. MurG subfamily.

The protein localises to the cell inner membrane. The catalysed reaction is di-trans,octa-cis-undecaprenyl diphospho-N-acetyl-alpha-D-muramoyl-L-alanyl-D-glutamyl-meso-2,6-diaminopimeloyl-D-alanyl-D-alanine + UDP-N-acetyl-alpha-D-glucosamine = di-trans,octa-cis-undecaprenyl diphospho-[N-acetyl-alpha-D-glucosaminyl-(1-&gt;4)]-N-acetyl-alpha-D-muramoyl-L-alanyl-D-glutamyl-meso-2,6-diaminopimeloyl-D-alanyl-D-alanine + UDP + H(+). It functions in the pathway cell wall biogenesis; peptidoglycan biosynthesis. Cell wall formation. Catalyzes the transfer of a GlcNAc subunit on undecaprenyl-pyrophosphoryl-MurNAc-pentapeptide (lipid intermediate I) to form undecaprenyl-pyrophosphoryl-MurNAc-(pentapeptide)GlcNAc (lipid intermediate II). The chain is UDP-N-acetylglucosamine--N-acetylmuramyl-(pentapeptide) pyrophosphoryl-undecaprenol N-acetylglucosamine transferase from Alcanivorax borkumensis (strain ATCC 700651 / DSM 11573 / NCIMB 13689 / SK2).